A 540-amino-acid chain; its full sequence is Glucose-6-phosphate isomerase (540 aa).

The Proton donor role is filled by Glu346. Catalysis depends on residues His377 and Lys505.

It belongs to the GPI family.

The protein localises to the cytoplasm. The catalysed reaction is alpha-D-glucose 6-phosphate = beta-D-fructose 6-phosphate. It functions in the pathway carbohydrate biosynthesis; gluconeogenesis. The protein operates within carbohydrate degradation; glycolysis; D-glyceraldehyde 3-phosphate and glycerone phosphate from D-glucose: step 2/4. In terms of biological role, catalyzes the reversible isomerization of glucose-6-phosphate to fructose-6-phosphate. This is Glucose-6-phosphate isomerase from Francisella philomiragia subsp. philomiragia (strain ATCC 25017 / CCUG 19701 / FSC 153 / O#319-036).